The sequence spans 63 residues: Large ribosomal subunit protein bL28 (63 aa).

The segment at 1 to 21 (MSRRDDLTGKGPMFGNNRSHA) is disordered.

Belongs to the bacterial ribosomal protein bL28 family.

This is Large ribosomal subunit protein bL28 from Mycoplasmopsis pulmonis (strain UAB CTIP) (Mycoplasma pulmonis).